Reading from the N-terminus, the 173-residue chain is T cell receptor gamma constant 1 (173 aa).

Residues 10-104 (PKPTIFLPSI…NKNGVDQEII (95 aa)) enclose the Ig-like domain. A disulfide bond links Cys32 and Cys88. N-linked (GlcNAc...) asparagine glycosylation is found at Asn66, Asn120, Asn126, and Asn135. The helical transmembrane segment at 139–161 (YYMYLLLLLKSVVYFAIITCCLL) threads the bilayer.

In terms of assembly, gamma-delta TR is a heterodimer composed of a gamma and delta chain; disulfide-linked. The gamma-delta TR is associated with the transmembrane signaling CD3 coreceptor proteins following the stoichiometry: a single gamma-delta TR heterodimer associates with one CD3D-CD3E heterodimer, one CD3G-CD3E heterodimer and one CD247 homodimer forming a stable octameric structure. Upon activation, gamma-delta TR complex associates with FCER1G to initiate intracellular signaling.

Its subcellular location is the cell membrane. Functionally, constant region of T cell receptor (TR) gamma chain that participates in the antigen recognition. Gamma-delta TRs recognize a variety of self and foreign non-peptide antigens frequently expressed at the epithelial boundaries between the host and external environment, including endogenous lipids presented by MH-like protein CD1D and phosphoantigens presented by butyrophilin-like molecule BTN3A1. Upon antigen recognition induces rapid, innate-like immune responses involved in pathogen clearance and tissue repair. Binding of gamma-delta TR complex to antigen triggers phosphorylation of immunoreceptor tyrosine-based activation motifs (ITAMs) in the CD3 chains by the LCK and FYN kinases, allowing the recruitment, phosphorylation, and activation of ZAP70 that facilitates phosphorylation of the scaffolding proteins LCP2 and LAT. This lead to the formation of a supramolecular signalosome that recruits the phospholipase PLCG1, resulting in calcium mobilization and ERK activation, ultimately leading to T cell expansion and differentiation into effector cells. Gamma-delta TRs are produced through somatic rearrangement of a limited repertoire of variable (V), diversity (D), and joining (J) genes. The potential diversity of gamma-delta TRs is conferred by the unique ability to rearrange (D) genes in tandem and to utilize all three reading frames. The combinatorial diversity is considerably increased by the sequence exonuclease trimming and random nucleotide (N) region additions which occur during the V-(D)-J rearrangements. The protein is T cell receptor gamma constant 1 of Homo sapiens (Human).